A 125-amino-acid chain; its full sequence is MTKSIGCDIIKVTRFNSFLQNRKKLERFFTQREIENSAMKGKGVLESLAGKFSAKESLIKALSPLINIKIKYSLKDIEIISLPKGNIIFQLHNDIKTLINQMNLKLYLTISHEREYAIAFVIVEN.

Residues Asp-8 and Glu-56 each contribute to the Mg(2+) site.

It belongs to the P-Pant transferase superfamily. AcpS family. It depends on Mg(2+) as a cofactor.

Its subcellular location is the cytoplasm. The enzyme catalyses apo-[ACP] + CoA = holo-[ACP] + adenosine 3',5'-bisphosphate + H(+). Transfers the 4'-phosphopantetheine moiety from coenzyme A to a Ser of acyl-carrier-protein. The chain is Holo-[acyl-carrier-protein] synthase from Borrelia turicatae (strain 91E135).